The sequence spans 407 residues: MEILNRLTLTDYIVFTSFILYLLFFLSPFLERKRLWTVAVTPLASIIGSGYLVSAPLLYYVLGKYAILGMAGIVILAYLIGGAIRYNIIKAEPILYGSESSKLKALLLDVERFSNLSLAFAYMISIAFYLRLLSSFVFSGFFERNEVYERLLTTGLLLFIGISGFIRRLHFLEFMEKYAVGLKLSIIFSFLTALLYYNYKNFSFAGEVKPFDLHSLEVLGGILLIVQGFETSKYLGEEYTPEERVKSMKLAQWISGFIYVSFMFLITSVFVHNPPKKLDETEIIFLASAVSLVLGYLLRFGPLMSQFSAAVADTIGAGGLIYEETNHRVSSRFGYLITTLVGVALVWSANVFEIIAYASKAFAFYYLLQTIIAWLVSFEKKDRLQFLVFTLLIPVLIFIVLFGKSVE.

Transmembrane regions (helical) follow at residues 13-30 (IVFT…SPFL), 40-62 (VTPL…YYVL), 67-89 (ILGM…YNII), 118-140 (LAFA…VFSG), 147-169 (VYER…IRRL), 179-199 (AVGL…YYNY), 253-271 (WISG…SVFV), 281-303 (TEII…FGPL), 334-356 (GYLI…EIIA), 361-378 (AFAF…LVSF), and 385-402 (QFLV…IVLF).

The protein localises to the cell membrane. This is an uncharacterized protein from Aquifex aeolicus (strain VF5).